A 266-amino-acid chain; its full sequence is Thymidylate synthase (266 aa).

R24 provides a ligand contact to dUMP. H54 contacts (6R)-5,10-methylene-5,6,7,8-tetrahydrofolate. 129-130 (RR) lines the dUMP pocket. C149 acts as the Nucleophile in catalysis. DUMP-binding positions include 169 to 172 (RSAD), N180, and 210 to 212 (HIY). A (6R)-5,10-methylene-5,6,7,8-tetrahydrofolate-binding site is contributed by D172. A265 serves as a coordination point for (6R)-5,10-methylene-5,6,7,8-tetrahydrofolate.

Belongs to the thymidylate synthase family. Bacterial-type ThyA subfamily. Homodimer.

The protein resides in the cytoplasm. It carries out the reaction dUMP + (6R)-5,10-methylene-5,6,7,8-tetrahydrofolate = 7,8-dihydrofolate + dTMP. It functions in the pathway pyrimidine metabolism; dTTP biosynthesis. Functionally, catalyzes the reductive methylation of 2'-deoxyuridine-5'-monophosphate (dUMP) to 2'-deoxythymidine-5'-monophosphate (dTMP) while utilizing 5,10-methylenetetrahydrofolate (mTHF) as the methyl donor and reductant in the reaction, yielding dihydrofolate (DHF) as a by-product. This enzymatic reaction provides an intracellular de novo source of dTMP, an essential precursor for DNA biosynthesis. The protein is Thymidylate synthase of Nocardia farcinica (strain IFM 10152).